The following is a 278-amino-acid chain: Undecaprenyl-diphosphatase 3 (278 aa).

The next 6 helical transmembrane spans lie at 42 to 62, 88 to 108, 119 to 139, 187 to 207, 224 to 244, and 254 to 274; these read DITA…LLYF, YRFG…GVAF, LWFV…ADHV, VAVT…AAAL, ATII…AWLL, and VFIG…ATGI.

This sequence belongs to the UppP family.

Its subcellular location is the cell membrane. The enzyme catalyses di-trans,octa-cis-undecaprenyl diphosphate + H2O = di-trans,octa-cis-undecaprenyl phosphate + phosphate + H(+). In terms of biological role, catalyzes the dephosphorylation of undecaprenyl diphosphate (UPP). Confers resistance to bacitracin. The protein is Undecaprenyl-diphosphatase 3 of Frankia casuarinae (strain DSM 45818 / CECT 9043 / HFP020203 / CcI3).